Reading from the N-terminus, the 225-residue chain is Membrin-11 (225 aa).

The residue at position 2 (Ala2) is an N-acetylalanine. Topologically, residues 2 to 200 are cytoplasmic; that stretch reads ASGIVEGGGS…VLRLIERRNR (199 aa). Residues 201–221 traverse the membrane as a helical; Anchor for type IV membrane protein segment; it reads VDTWIKYAGMIATLVILYLFI. At 222–225 the chain is on the vesicular side; sequence RWTR.

This sequence belongs to the GOSR2 family.

The protein localises to the golgi apparatus membrane. Involved in transport of proteins from the cis/medial-Golgi to the trans-Golgi network. This is Membrin-11 (MEMB11) from Arabidopsis thaliana (Mouse-ear cress).